The sequence spans 414 residues: E3 ubiquitin-protein ligase makorin-2 (414 aa).

2 C3H1-type zinc fingers span residues 2–29 and 31–58; these read STKQ…HDLT and SKPS…HIKP. Residues 57 to 94 form a disordered region; that stretch reads KPPGRGSGAPADHSNRSSSSAGASAPGPGPPANTSKHL. The span at 73–82 shows a compositional bias: low complexity; sequence SSSSAGASAP. Residues 164 to 191 form a C3H1-type 3 zinc finger; it reads QTSPQICPFLAAGQCQYGESCPYLHGEM. The tract at residues 192-221 is makorin-type Cys-His; that stretch reads CEICRQHVLHPHDPEQRAAHEKKCMVAFEM. The RING-type zinc-finger motif lies at 237 to 291; the sequence is CKICLDVVYEKSSPSERRFGILSSCAHTYCLNCIRQWRCVEQLHNQIRKSCPECR. The segment at 320–349 adopts a C3H1-type 4 zinc-finger fold; the sequence is GVSKKACKYFDQGRGTCPFGGKCFYMHAYA.

The protein localises to the cytoplasm. Its subcellular location is the nucleus. The catalysed reaction is S-ubiquitinyl-[E2 ubiquitin-conjugating enzyme]-L-cysteine + [acceptor protein]-L-lysine = [E2 ubiquitin-conjugating enzyme]-L-cysteine + N(6)-ubiquitinyl-[acceptor protein]-L-lysine.. It participates in protein modification; protein ubiquitination. E3 ubiquitin ligase catalyzing the covalent attachment of ubiquitin moieties onto substrate proteins. Inhibits neurogenesis and axis formation during embryonic development by modulating the phosphatidylinositol 3-kinase (PI3K) pathway. Acts downstream of PI3K and akt1 to up-regulate gsk3b mRNA expression. The protein is E3 ubiquitin-protein ligase makorin-2 (mkrn2) of Danio rerio (Zebrafish).